Here is a 536-residue protein sequence, read N- to C-terminus: Keratin, type II cytoskeletal 4 (536 aa).

Residues 1–145 (MISRQSSVRG…DPEIQKIRTA (145 aa)) form a head region. The residue at position 13 (Arg13) is an Omega-N-methylarginine. Positions 146–181 (EREQIKTLNNKFASFIDKVRFLEQQNKVLETKWNLL) are coil 1A. Residues 146 to 457 (EREQIKTLNN…KLLEGEECRM (312 aa)) enclose the IF rod domain. Positions 182–200 (QQQTTTTSPRNLDPFFETY) are linker 1. The interval 201-293 (INALRKNLDT…LYEAELSQMQ (93 aa)) is coil 1B. Positions 294 to 316 (THVSDTSVVLSMDNNRNLDLDGI) are linker 12. Residues 317–454 (IAEVRAQYEE…TYRKLLEGEE (138 aa)) are coil 2. Positions 455–524 (CRMSGECKSA…TSSATITKRS (70 aa)) are tail. Positions 515–536 (TSSATITKRSPRTRQDPDGLQP) are disordered. The segment covering 527-536 (TRQDPDGLQP) has biased composition (basic and acidic residues).

This sequence belongs to the intermediate filament family. As to quaternary structure, heterotetramer of two type I and two type II keratins. keratin-4 is generally associated with keratin-13.

The sequence is that of Keratin, type II cytoskeletal 4 from Rattus norvegicus (Rat).